The chain runs to 348 residues: MGQCYYNETIGFFYNNSGKELSLHWRPKDVVVVALGLTVSVLVLLTNLLVIAAIASNRRFHQPIYYLLGNLAAADLFAGMAYLFLMFHTGPRTARLSIKGWFLRQGLLDTSLTASVATLLAIAVERHRSVMAVQLHSRLPRGRVVTLIVGVWAAALGLGLLPAHFWHCLCDLDSCSRMVPLFSRSYLAAWALSSLLVFLLMVAVYTRIFFYVRRRVERMAEHVSCHPRYRETTLSLVKTVVIILGAFVVCWTPGQVVLLLDGLDCKSCNVLAVEKYFLLLAEANSLVNAVVYSCRDAEMRRTFRRLLCCMCLRWSSHKSARYSASAQTGASTRIMLPENGRPLMDSTL.

Topologically, residues 1–30 (MGQCYYNETIGFFYNNSGKELSLHWRPKDV) are extracellular. N-linked (GlcNAc...) asparagine glycosylation is found at N7 and N15. A helical transmembrane segment spans residues 31–51 (VVVALGLTVSVLVLLTNLLVI). Topologically, residues 52–66 (AAIASNRRFHQPIYY) are cytoplasmic. A helical transmembrane segment spans residues 67–87 (LLGNLAAADLFAGMAYLFLMF). Over 88–104 (HTGPRTARLSIKGWFLR) the chain is Extracellular. Residues 105-124 (QGLLDTSLTASVATLLAIAV) form a helical membrane-spanning segment. The Cytoplasmic portion of the chain corresponds to 125–144 (ERHRSVMAVQLHSRLPRGRV). Residues 145-165 (VTLIVGVWAAALGLGLLPAHF) form a helical membrane-spanning segment. Residues 166 to 185 (WHCLCDLDSCSRMVPLFSRS) lie on the Extracellular side of the membrane. Residues 186-206 (YLAAWALSSLLVFLLMVAVYT) traverse the membrane as a helical segment. At 207-239 (RIFFYVRRRVERMAEHVSCHPRYRETTLSLVKT) the chain is on the cytoplasmic side. A helical transmembrane segment spans residues 240–260 (VVIILGAFVVCWTPGQVVLLL). Topologically, residues 261-270 (DGLDCKSCNV) are extracellular. Residues 271-291 (LAVEKYFLLLAEANSLVNAVV) form a helical membrane-spanning segment. The Cytoplasmic segment spans residues 292–348 (YSCRDAEMRRTFRRLLCCMCLRWSSHKSARYSASAQTGASTRIMLPENGRPLMDSTL). C308 is lipidated: S-palmitoyl cysteine. Residues 345-348 (DSTL) carry the PDZ-binding motif.

This sequence belongs to the G-protein coupled receptor 1 family. As to quaternary structure, interacts with SLC9A3R2/NHERF2, MAGI3 and PLCB3. Interacts with RALA and GRK2. In terms of tissue distribution, most abundantly expressed in testes, kidney, and embryonic brain. Other organs also express the transcript, including heart, lung, spleen, thymus, stomach, and adult brain. Several have little or no expression, including liver, small intestine, and skeletal muscle.

The protein resides in the cell surface. The protein localises to the cell membrane. Its function is as follows. Receptor for lysophosphatidic acid (LPA), a mediator of diverse cellular activities. Seems to be coupled to the G(i)/G(o), G(12)/G(13), and G(q) families of heteromeric G proteins. Plays a key role in phospholipase C-beta (PLC-beta) signaling pathway Stimulates phospholipase C (PLC) activity in a manner that is independent of RALA activation. The polypeptide is Lysophosphatidic acid receptor 2 (Mus musculus (Mouse)).